A 787-amino-acid chain; its full sequence is ER degradation-enhancing alpha-mannosidase-like protein 1 (787 aa).

Residues 1 to 22 (MGSLHSIFCVCLILLCIFKENS) form the signal peptide. N-linked (GlcNAc...) asparagine glycosylation is found at asparagine 479, asparagine 609, asparagine 670, asparagine 693, and asparagine 756.

The protein belongs to the glycosyl hydrolase 47 family.

It is found in the endoplasmic reticulum lumen. Alpha-mannosidase-like protein involved in endoplasmic reticulum-associated degradation (ERAD). Delivers misfolded glycoproteins to proteasomes. It lacks mannosidase activity. The chain is ER degradation-enhancing alpha-mannosidase-like protein 1 (mnl1) from Schizosaccharomyces pombe (strain 972 / ATCC 24843) (Fission yeast).